We begin with the raw amino-acid sequence, 460 residues long: Kynureninase (460 aa).

Pyridoxal 5'-phosphate is bound by residues L127, T128, 165–168, D249, H252, and Y274; that span reads FPSD. Residue K275 is modified to N6-(pyridoxal phosphate)lysine. Pyridoxal 5'-phosphate is bound by residues W304 and N332.

It belongs to the kynureninase family. Homodimer. Requires pyridoxal 5'-phosphate as cofactor.

It localises to the cytoplasm. The catalysed reaction is L-kynurenine + H2O = anthranilate + L-alanine + H(+). It carries out the reaction 3-hydroxy-L-kynurenine + H2O = 3-hydroxyanthranilate + L-alanine + H(+). It functions in the pathway amino-acid degradation; L-kynurenine degradation; L-alanine and anthranilate from L-kynurenine: step 1/1. The protein operates within cofactor biosynthesis; NAD(+) biosynthesis; quinolinate from L-kynurenine: step 2/3. Functionally, catalyzes the cleavage of L-kynurenine (L-Kyn) and L-3-hydroxykynurenine (L-3OHKyn) into anthranilic acid (AA) and 3-hydroxyanthranilic acid (3-OHAA), respectively. This Monosiga brevicollis (Choanoflagellate) protein is Kynureninase.